A 123-amino-acid chain; its full sequence is Secreted LysM effector Lys1 (123 aa).

A signal peptide spans methionine 1–alanine 20. One can recognise a LysM domain in the interval lysine 72–valine 118.

Belongs to the secreted LysM effector family.

Might have a role in sequestration of chitin oligosaccharides (breakdown products of fungal cell walls that are released during invasion and act as triggers of host immunity) to dampen host defense. The polypeptide is Secreted LysM effector Lys1 (Pochonia chlamydosporia (strain 123) (Metacordyceps chlamydosporia)).